We begin with the raw amino-acid sequence, 138 residues long: Basic phospholipase A2 DAV-N6 (138 aa).

A signal peptide spans 1-16 (MRTLWIVAVLLVSVEG). Intrachain disulfides connect Cys42/Cys131, Cys44/Cys60, Cys59/Cys111, Cys65/Cys138, Cys66/Cys104, Cys73/Cys97, and Cys91/Cys102. The Ca(2+) site is built by Tyr43, Gly45, and Gly47. Residue His63 is part of the active site. Position 64 (Asp64) interacts with Ca(2+). The active site involves Asp105.

Requires Ca(2+) as cofactor. As to expression, expressed by the venom gland.

The protein resides in the secreted. The catalysed reaction is a 1,2-diacyl-sn-glycero-3-phosphocholine + H2O = a 1-acyl-sn-glycero-3-phosphocholine + a fatty acid + H(+). Functionally, snake venom phospholipase A2 (PLA2) that inhibits neuromuscular transmission by blocking acetylcholine release from the nerve termini. PLA2 catalyzes the calcium-dependent hydrolysis of the 2-acyl groups in 3-sn-phosphoglycerides. The sequence is that of Basic phospholipase A2 DAV-N6 from Deinagkistrodon acutus (Hundred-pace snake).